Consider the following 349-residue polypeptide: Ribosomal RNA small subunit methyltransferase H (349 aa).

S-adenosyl-L-methionine-binding positions include 34-36 (GGH), D54, F81, D102, and Q109.

Belongs to the methyltransferase superfamily. RsmH family.

The protein resides in the cytoplasm. The catalysed reaction is cytidine(1402) in 16S rRNA + S-adenosyl-L-methionine = N(4)-methylcytidine(1402) in 16S rRNA + S-adenosyl-L-homocysteine + H(+). Specifically methylates the N4 position of cytidine in position 1402 (C1402) of 16S rRNA. The chain is Ribosomal RNA small subunit methyltransferase H from Dehalococcoides mccartyi (strain ATCC BAA-2266 / KCTC 15142 / 195) (Dehalococcoides ethenogenes (strain 195)).